The chain runs to 935 residues: Potassium channel AKT1 (935 aa).

The Cytoplasmic segment spans residues 1 to 106 (MARWGAARMA…YDRRYRIWET (106 aa)). A helical membrane pass occupies residues 107-127 (FLIVLVVYSAWVSPFEFGFIP). Topologically, residues 128 to 136 (KPTGALATA) are extracellular. Residues 137 to 157 (DNVVNAFFAVDIILTFFVAYL) form a helical membrane-spanning segment. The Cytoplasmic portion of the chain corresponds to 158 to 178 (DKMSYMLEDDPKKIAWRYSTT). A helical membrane pass occupies residues 179–199 (WLVLDVASTIPSEFARRILPS). Over 200–205 (KLRSYG) the chain is Extracellular. Residues 206–226 (FFNMLRLWRLRRVSSLFSRLE) traverse the membrane as a helical; Voltage-sensor segment. At 227-240 (KDRHFNYFWVRCAK) the chain is on the cytoplasmic side. A helical membrane pass occupies residues 241–261 (LICVTLFAVHCAACFYYLLAD). Over 262–288 (RYPVPTSTWIGNYMADFHERSLWIRYV) the chain is Extracellular. Positions 289–308 (TSVYWSITTLTTVGYGDLHA) form an intramembrane region, pore-forming. Residues 309 to 312 (ENTR) are Extracellular-facing. A helical transmembrane segment spans residues 313-333 (EMIFNIFYMLFNLGLTAYLIG). Topologically, residues 334 to 935 (NMTNLVVHGT…WDAEKMKGKS (602 aa)) are cytoplasmic. 419–538 (LFQGVSNDLI…TIIMNNLIQF (120 aa)) contacts a nucleoside 3',5'-cyclic phosphate. ANK repeat units follow at residues 565 to 594 (DLPI…DPNE), 598 to 627 (DGHT…DPNA), 631 to 660 (EGKV…DLSS), 662 to 691 (DTGL…DVNR), 695 to 724 (DGTT…DIDK), and 728 to 757 (NGWT…ATAS). The disordered stretch occupies residues 826–854 (SQAQRETDHPLSRGGLAATGSPNPSSGSR). Over residues 845–854 (GSPNPSSGSR) the composition is skewed to polar residues. Residues 859-935 (RVTISCPEKG…WDAEKMKGKS (77 aa)) form the KHA domain.

Belongs to the potassium channel family. Plant (TC 1.A.1.4) subfamily. In terms of assembly, the potassium channel is probably a homo- or heterotetrameric complex of pore-forming subunits. In terms of tissue distribution, expressed in roots and coleoptile of young seedlings.

It is found in the membrane. Highly selective inward-rectifying potassium channel that mediates potassium uptake by plant roots. Assuming opened or closed conformations in response to the voltage difference across the membrane, the channel is activated by hyperpolarization. May be a major salt-sensitive potassium channel in roots. This is Potassium channel AKT1 (AKT1) from Oryza sativa subsp. japonica (Rice).